The chain runs to 231 residues: Putative aminodeoxychorismate lyase (231 aa).

The protein belongs to the class-IV pyridoxal-phosphate-dependent aminotransferase family. Pyridoxal 5'-phosphate serves as cofactor.

The protein resides in the cytoplasm. It is found in the nucleus. It carries out the reaction 4-amino-4-deoxychorismate = 4-aminobenzoate + pyruvate + H(+). Its pathway is cofactor biosynthesis; tetrahydrofolate biosynthesis; 4-aminobenzoate from chorismate: step 2/2. Its function is as follows. Converts 4-amino-4-deoxychorismate into 4-aminobenzoate (PABA) and pyruvate. The protein is Putative aminodeoxychorismate lyase of Schizosaccharomyces pombe (strain 972 / ATCC 24843) (Fission yeast).